The primary structure comprises 186 residues: MKGGSIEAGEVSKDASPRKGVARGLSIMDFILRIIAAVATLGSALAMGTTNETLPFATQFIKFRAEFDDLPSLVFFVMANAVVCGYLVLSLMISVFHILRSTPVKSRILLVALDTVMLSLVTASASAATSIVYIAHNGNTGANWFAICQQYNNFCERISGSLIGSYIAVALFIILIMLSLVAISRN.

Residues 1 to 26 (MKGGSIEAGEVSKDASPRKGVARGLS) are Cytoplasmic-facing. A helical transmembrane segment spans residues 27 to 47 (IMDFILRIIAAVATLGSALAM). At 48–72 (GTTNETLPFATQFIKFRAEFDDLPS) the chain is on the extracellular side. An N-linked (GlcNAc...) asparagine glycan is attached at asparagine 51. Residues 73 to 93 (LVFFVMANAVVCGYLVLSLMI) form a helical membrane-spanning segment. Residues 94-107 (SVFHILRSTPVKSR) lie on the Cytoplasmic side of the membrane. Residues 108–128 (ILLVALDTVMLSLVTASASAA) form a helical membrane-spanning segment. The Extracellular portion of the chain corresponds to 129 to 162 (TSIVYIAHNGNTGANWFAICQQYNNFCERISGSL). The chain crosses the membrane as a helical span at residues 163-183 (IGSYIAVALFIILIMLSLVAI). The Cytoplasmic segment spans residues 184 to 186 (SRN).

The protein belongs to the Casparian strip membrane proteins (CASP) family. In terms of assembly, homodimer and heterodimers.

The protein localises to the cell membrane. Functionally, regulates membrane-cell wall junctions and localized cell wall deposition. Required for establishment of the Casparian strip membrane domain (CSD) and the subsequent formation of Casparian strips, a cell wall modification of the root endodermis that determines an apoplastic barrier between the intraorganismal apoplasm and the extraorganismal apoplasm and prevents lateral diffusion. This is CASP-like protein 7 from Glycine max (Soybean).